We begin with the raw amino-acid sequence, 619 residues long: TOX high mobility group box family member 4 (619 aa).

Disordered regions lie at residues 155–227 (LSLG…QKPV), 304–335 (ELDPVPQSQTPSPPPVTTADPASPAPASTESP), and 436–458 (LPPPRLQPPPLQQMPQPPTQQQV). A Phosphothreonine modification is found at T176. S178 and S182 each carry phosphoserine. A compositionally biased stretch (basic and acidic residues) spans 183-193 (LHEDGVDDFRR). Over residues 208–218 (KQKAPKKRKKK) the composition is skewed to basic residues. The Nuclear localization signal motif lies at 213–218 (KKRKKK). The HMG box DNA-binding region spans 223–291 (PQKPVSAYAL…EYLKALAAYK (69 aa)). At T313 the chain carries Phosphothreonine. S315 carries the post-translational modification Phosphoserine. Positions 320 to 335 (TTADPASPAPASTESP) are enriched in low complexity. Positions 436 to 453 (LPPPRLQPPPLQQMPQPP) are enriched in pro residues. The residue at position 479 (R479) is an Asymmetric dimethylarginine. Phosphoserine is present on residues S531, S548, S550, S558, S560, and S565.

As to quaternary structure, component of the PNUTS-PP1 phosphatase complex, composed of PPP1R10/PNUTS, TOX4, WDR82 and PPP1CA or PPP1CB or PPP1CC. Interacts with PPP1R10/PNUTS. Interacts with FOXO1 and CREB1 (increased by cAMP); FOXO1 and CREB1 are required for full induction of TOX4-dependent activity and the interactions are inhibited by insulin.

The protein resides in the nucleus. Its subcellular location is the chromosome. With respect to regulation, in liver, recruited to target gene promoters following treatment with dexamethasone and cAMP. Binding is decreased in presence of insulin. Functionally, transcription factor that modulates cell fate reprogramming from the somatic state to the pluripotent and neuronal fate. In liver, controls the expression of hormone-regulated gluconeogenic genes such as G6PC1 and PCK1. This regulation is independent of the insulin receptor activation. Also acts as a regulatory component of protein phosphatase 1 (PP1) complexes. Component of the PNUTS-PP1 protein phosphatase complex, a PP1 complex that regulates RNA polymerase II transcription pause-release. PNUTS-PP1 also plays a role in the control of chromatin structure and cell cycle progression during the transition from mitosis into interphase. The sequence is that of TOX high mobility group box family member 4 (Tox4) from Rattus norvegicus (Rat).